The chain runs to 207 residues: Thaumatin-like protein 1 (207 aa).

8 cysteine pairs are disulfide-bonded: C9–C202, C50–C60, C65–C71, C117–C191, C122–C174, C130–C140, C144–C153, and C154–C161.

This sequence belongs to the thaumatin family. In terms of assembly, monomer. In terms of processing, not glycosylated.

The protein localises to the secreted. Functionally, acidic thaumatin-like protein. Exhibits weak beta-1,3-glucanase activity with laminarin as substrate. This chain is Thaumatin-like protein 1 (TLP1), found in Manilkara zapota (Sapodilla plum).